The sequence spans 126 residues: Glycine cleavage system H protein (126 aa).

The Lipoyl-binding domain occupies 24-105 (TLTVGITDHA…AYGVWLFKLK (82 aa)). Lys-65 carries the N6-lipoyllysine modification.

This sequence belongs to the GcvH family. The glycine cleavage system is composed of four proteins: P, T, L and H. The cofactor is (R)-lipoate.

Functionally, the glycine cleavage system catalyzes the degradation of glycine. The H protein shuttles the methylamine group of glycine from the P protein to the T protein. The polypeptide is Glycine cleavage system H protein (Burkholderia vietnamiensis (strain G4 / LMG 22486) (Burkholderia cepacia (strain R1808))).